The primary structure comprises 477 residues: Oleate hydroxylase FAH12 (477 aa).

The disordered stretch occupies residues 26-48; that stretch reads YESSAAVSPAESPRTSASSTSLS. A compositionally biased stretch (low complexity) spans 27 to 48; sequence ESSAAVSPAESPRTSASSTSLS. 2 consecutive transmembrane segments (helical) span residues 101–118 and 133–153; these read AYVLRDLLCLSTTFYLFH and FVLWSIYTVLQGLFATGLWVI. A Histidine box-1 motif is present at residues 155–159; it reads HECGH. A helical membrane pass occupies residues 167–187; the sequence is FISDLTGWVIHSALLVPYFSW. Residues 191 to 195 carry the Histidine box-2 motif; that stretch reads HSAHH. Helical transmembrane passes span 234-254, 299-319, and 327-347; these read PIYTALHLVGKQLIGWPSYLM, YIVLSDIGLGLAIAALVYLGN, and AVWYFLPYLWVNHWLVAITFL.

Belongs to the fatty acid desaturase type 1 family.

Its subcellular location is the microsome membrane. The enzyme catalyses (9Z)-octadecenoate + AH2 + O2 = (12R)-hydroxy-(9Z)-octadecenoate + A + H2O. The protein operates within lipid metabolism; monounsaturated fatty acid biosynthesis. In terms of biological role, oleate hydroxylase involved in the biosynthesis of ricinoleate (12-hydroxy-cis-9-octadecenoate), that is present at high levels in C.purpurea sclerotium tissue. Exhibits delta(12) hydroxylase activity on 16C and 18C monounsaturated fatty acids (i.e. oleic and palmitoleic acids), and, to a lower extent, gamma(3) hydroxylase activity on ricinoleate. The chain is Oleate hydroxylase FAH12 from Claviceps purpurea (Ergot fungus).